The sequence spans 463 residues: Perilipin-5 (463 aa).

Residues 1–32 (MDQRGEDTTLAPHSRMSGDQTAQDPGSSLGEL) form a disordered region. Residues 1-123 (MDQRGEDTTL…KLEEKLPFLQ (123 aa)) form an interaction with LIPE region. The segment at 1 to 188 (MDQRGEDTTL…RFLPMTEAEL (188 aa)) is essential for lipid droplet targeting. Phosphoserine is present on residues Ser-17, Ser-163, and Ser-337. Positions 17-26 (SGDQTAQDPG) are enriched in polar residues. An interaction with PNPLA2 and ABHD5 region spans residues 200–463 (VGTVEEQRQQ…KHTMMPELDF (264 aa)). The segment at 433–463 (AWEAESADPGGQEAEPPRGQGKHTMMPELDF) is disordered. Positions 444–463 (QEAEPPRGQGKHTMMPELDF) are necessary for mitochondria recruitment at the lipid droplet surface.

This sequence belongs to the perilipin family. In terms of assembly, homooligomer. Interacts with PNPLA2; prevents interaction of PNPLA2 with ABHD5. Interacts with ABHD5; targets ABHD5 to lipid droplets and promotes interaction of ABHD5 with PNPLA2. Interacts with LIPE. In terms of processing, phosphorylated by PKA. Phosphorylated on serine in skeletal muscle at rest or with lipolytic stimulation. In terms of tissue distribution, highly expressed in oxidative tissues, including heart, liver, brown adipose tissue (BAT) and slow-twitch fibers of skeletal muscle. Lower expression in epididymal white adipose tissue and anterior tibialis and quadriceps. Expressed in adrenal glands. Isoform 2 has the highest expression in heart.

It localises to the lipid droplet. Its subcellular location is the cytoplasm. The protein localises to the mitochondrion. Functionally, lipid droplet-associated protein that maintains the balance between lipogenesis and lipolysis and also regulates fatty acid oxidation in oxidative tissues. Recruits mitochondria to the surface of lipid droplets and is involved in lipid droplet homeostasis by regulating both the storage of fatty acids in the form of triglycerides and the release of fatty acids for mitochondrial fatty acid oxidation. In lipid droplet triacylglycerol hydrolysis, plays a role as a scaffolding protein for three major key lipolytic players: ABHD5, PNPLA2 and LIPE. Reduces the triacylglycerol hydrolase activity of PNPLA2 by recruiting and sequestering PNPLA2 to lipid droplets. Phosphorylation by PKA enables lipolysis probably by promoting release of ABHD5 from the perilipin scaffold and by facilitating interaction of ABHD5 with PNPLA2. Also increases lipolysis through interaction with LIPE and upon PKA-mediated phosphorylation of LIPE. The polypeptide is Perilipin-5 (Plin5) (Mus musculus (Mouse)).